Consider the following 397-residue polypeptide: uncharacterized protein (397 aa).

The next 12 membrane-spanning stretches (helical) occupy residues 10-30, 48-68, 76-96, 106-126, 141-161, 165-185, 209-229, 242-262, 274-294, 296-316, 334-354, and 363-383; these read FIIFVLMICTFSIGYTEYAVM, GLLVTAYAASVCLTGPLVTII, PVLLGLMAIFILSNLMSALAP, ILSASIHGAFFAIAMVFASEM, GGLTVALMLGVPFGSYLGDVL, AVFSIITALGVIGFLGLMAAV, LFSFAITILGYSGVFIAYTFI, VGITGALFAYGLGGVAGNFFA, MIGVMIGLIGVLAVFPYIAIY, AAAIVATFLFGACAFGTPPLL, VSVSAFNLANALGAWIGGMIL, and LFAGGALMTACGLVLSTFAHL.

The protein belongs to the major facilitator superfamily.

The protein resides in the cell membrane. This is an uncharacterized protein from Bacillus subtilis (strain 168).